Consider the following 582-residue polypeptide: tRNA-guanine(15) transglycosylase (582 aa).

The Nucleophile role is filled by Asp95. The substrate site is built by Asp130 and Gly196. Cys279, Cys281, and Cys284 together coordinate Zn(2+). The PUA domain maps to Arg507 to Glu582.

This sequence belongs to the archaeosine tRNA-ribosyltransferase family. Homodimer. Zn(2+) is required as a cofactor.

It carries out the reaction guanosine(15) in tRNA + 7-cyano-7-deazaguanine = 7-cyano-7-carbaguanosine(15) in tRNA + guanine. It functions in the pathway tRNA modification; archaeosine-tRNA biosynthesis. In terms of biological role, exchanges the guanine residue with 7-cyano-7-deazaguanine (preQ0) at position 15 in the dihydrouridine loop (D-loop) of archaeal tRNAs. This is tRNA-guanine(15) transglycosylase (tgtA) from Pyrococcus horikoshii (strain ATCC 700860 / DSM 12428 / JCM 9974 / NBRC 100139 / OT-3).